A 635-amino-acid chain; its full sequence is Threonine--tRNA ligase (635 aa).

Positions M1 to T61 constitute a TGS domain. The segment at D242–P533 is catalytic. Zn(2+)-binding residues include C333, H384, and H510.

It belongs to the class-II aminoacyl-tRNA synthetase family. In terms of assembly, homodimer. The cofactor is Zn(2+).

The protein resides in the cytoplasm. The catalysed reaction is tRNA(Thr) + L-threonine + ATP = L-threonyl-tRNA(Thr) + AMP + diphosphate + H(+). In terms of biological role, catalyzes the attachment of threonine to tRNA(Thr) in a two-step reaction: L-threonine is first activated by ATP to form Thr-AMP and then transferred to the acceptor end of tRNA(Thr). Also edits incorrectly charged L-seryl-tRNA(Thr). This is Threonine--tRNA ligase from Rickettsia akari (strain Hartford).